The following is a 137-amino-acid chain: Nucleoside diphosphate kinase (137 aa).

Residues K9, F57, R85, T91, R102, and N112 each coordinate ATP. The active-site Pros-phosphohistidine intermediate is H115.

The protein belongs to the NDK family. In terms of assembly, homotetramer. Mg(2+) serves as cofactor.

It localises to the cytoplasm. It catalyses the reaction a 2'-deoxyribonucleoside 5'-diphosphate + ATP = a 2'-deoxyribonucleoside 5'-triphosphate + ADP. It carries out the reaction a ribonucleoside 5'-diphosphate + ATP = a ribonucleoside 5'-triphosphate + ADP. Major role in the synthesis of nucleoside triphosphates other than ATP. The ATP gamma phosphate is transferred to the NDP beta phosphate via a ping-pong mechanism, using a phosphorylated active-site intermediate. In Pelobacter propionicus (strain DSM 2379 / NBRC 103807 / OttBd1), this protein is Nucleoside diphosphate kinase.